The following is a 265-amino-acid chain: Regulator of G-protein signaling 9-binding protein (265 aa).

Residues 1–37 (MAAPEVSSAGPNMLHPNSRTLTLRGKRGHAAEDSSQG) form a disordered region. Residues 70-92 (TRLREELEESRKKAFDLSTDLSN) adopt a coiled-coil conformation. Residues 168–187 (KSPSSSRMHENQQRTERPCS) form a disordered region. A compositionally biased stretch (basic and acidic residues) spans 174-186 (RMHENQQRTERPC).

Belongs to the RGS7BP/RGS9BP family.

Regulator of G protein-coupled receptor (GPCR) signaling. Probably acts by regulating the activity of some 'R7' family protein (RGS6, RGS7, RGS9 and/or RGS11). The protein is Regulator of G-protein signaling 9-binding protein (rgs9bp) of Xenopus tropicalis (Western clawed frog).